Reading from the N-terminus, the 362-residue chain is Chorismate synthase (362 aa).

R48 and R54 together coordinate NADP(+). FMN-binding positions include 125-127, 241-242, G286, 301-305, and R327; these read RSS, NA, and KPTSS.

It belongs to the chorismate synthase family. As to quaternary structure, homotetramer. FMNH2 is required as a cofactor.

It catalyses the reaction 5-O-(1-carboxyvinyl)-3-phosphoshikimate = chorismate + phosphate. The protein operates within metabolic intermediate biosynthesis; chorismate biosynthesis; chorismate from D-erythrose 4-phosphate and phosphoenolpyruvate: step 7/7. Its function is as follows. Catalyzes the anti-1,4-elimination of the C-3 phosphate and the C-6 proR hydrogen from 5-enolpyruvylshikimate-3-phosphate (EPSP) to yield chorismate, which is the branch point compound that serves as the starting substrate for the three terminal pathways of aromatic amino acid biosynthesis. This reaction introduces a second double bond into the aromatic ring system. The polypeptide is Chorismate synthase (Paramagnetospirillum magneticum (strain ATCC 700264 / AMB-1) (Magnetospirillum magneticum)).